A 178-amino-acid polypeptide reads, in one-letter code: Endoribonuclease YbeY (178 aa).

The Zn(2+) site is built by His-118, His-122, and His-128.

The protein belongs to the endoribonuclease YbeY family. Zn(2+) serves as cofactor.

It localises to the cytoplasm. Single strand-specific metallo-endoribonuclease involved in late-stage 70S ribosome quality control and in maturation of the 3' terminus of the 16S rRNA. The polypeptide is Endoribonuclease YbeY (Mycobacterium leprae (strain Br4923)).